A 202-amino-acid chain; its full sequence is Imidazoleglycerol-phosphate dehydratase (202 aa).

The protein belongs to the imidazoleglycerol-phosphate dehydratase family.

The protein localises to the cytoplasm. The catalysed reaction is D-erythro-1-(imidazol-4-yl)glycerol 3-phosphate = 3-(imidazol-4-yl)-2-oxopropyl phosphate + H2O. It participates in amino-acid biosynthesis; L-histidine biosynthesis; L-histidine from 5-phospho-alpha-D-ribose 1-diphosphate: step 6/9. The polypeptide is Imidazoleglycerol-phosphate dehydratase (Parasynechococcus marenigrum (strain WH8102)).